The sequence spans 424 residues: Probable ribonuclease FAU-1 (424 aa).

It belongs to the FAU-1 family.

Functionally, probable RNase involved in rRNA stability through maturation and/or degradation of precursor rRNAs. Binds to RNA in loop regions with AU-rich sequences. This chain is Probable ribonuclease FAU-1, found in Saccharolobus islandicus (strain M.16.27) (Sulfolobus islandicus).